Here is a 499-residue protein sequence, read N- to C-terminus: Flotillin-like protein 2 (499 aa).

The S-palmitoyl cysteine moiety is linked to residue C37. A coiled-coil region spans residues 243–319 (LREEAKVKAE…LRLTEKLKAE (77 aa)).

This sequence belongs to the band 7/mec-2 family. Flotillin subfamily. May be palmitoylated.

The protein localises to the cell membrane. Its subcellular location is the membrane. It localises to the caveola. Functionally, may act as a scaffolding protein within caveolar membranes, functionally participating in formation of caveolae or caveolae-like vesicles. The chain is Flotillin-like protein 2 (FLOT2) from Oryza sativa subsp. japonica (Rice).